Consider the following 298-residue polypeptide: ATP phosphoribosyltransferase (298 aa).

This sequence belongs to the ATP phosphoribosyltransferase family. Long subfamily. The cofactor is Mg(2+).

It localises to the cytoplasm. It carries out the reaction 1-(5-phospho-beta-D-ribosyl)-ATP + diphosphate = 5-phospho-alpha-D-ribose 1-diphosphate + ATP. It participates in amino-acid biosynthesis; L-histidine biosynthesis; L-histidine from 5-phospho-alpha-D-ribose 1-diphosphate: step 1/9. Its activity is regulated as follows. Feedback inhibited by histidine. Catalyzes the condensation of ATP and 5-phosphoribose 1-diphosphate to form N'-(5'-phosphoribosyl)-ATP (PR-ATP). Has a crucial role in the pathway because the rate of histidine biosynthesis seems to be controlled primarily by regulation of HisG enzymatic activity. The chain is ATP phosphoribosyltransferase from Vibrio parahaemolyticus serotype O3:K6 (strain RIMD 2210633).